Consider the following 138-residue polypeptide: uncharacterized protein (138 aa).

Residues 19–40 (ECKVSVISFFLLAFLLMAHIWL) traverse the membrane as a helical segment. Tandem repeats lie at residues 94-106 (KGEI…KKEG), 107-119 (KGEI…KKEG), and 120-132 (KGEI…KKEV). The interval 94-132 (KGEIEGKEEKKEGKGEIEGKEEKKEGKGEIEGKEEKKEV) is 3 X 13 AA tandem repeats of K-G-E-I-E-G-K-E-E-K-K-E-[GV]. Residues 98–138 (EGKEEKKEGKGEIEGKEEKKEGKGEIEGKEEKKEVENGPRK) are disordered.

As to expression, expressed in roots, leaves and flowers.

The protein localises to the mitochondrion membrane. Its function is as follows. Involved in cytoplasmic male sterility (CMS) by leading to pollen abortion. Not expressed in fertile (normal) plants. This is an uncharacterized protein from Raphanus sativus (Radish).